Consider the following 809-residue polypeptide: PiggyBac transposable element-derived protein 1 (809 aa).

Positions 44 to 126 constitute an SCAN box domain; it reads RLRFRHFCYQ…TVLENLETGS (83 aa). The segment at 170 to 199 is disordered; that stretch reads CEPPQRPQGNPQEVSGPVPHGSAHLQEKNP. A Glycyl lysine isopeptide (Lys-Gly) (interchain with G-Cter in SUMO2) cross-link involves residue K218. The segment at 271 to 297 is disordered; it reads KQETSEEMEQSGEASGKPNRECAPQIP. S360 bears the Phosphoserine mark.

In Homo sapiens (Human), this protein is PiggyBac transposable element-derived protein 1 (PGBD1).